A 312-amino-acid polypeptide reads, in one-letter code: Protein lon-1 (312 aa).

Residues 1–18 (MNYLLTALIALLAPISVA) form the signal peptide. The region spanning 87 to 209 (EHNRYRRMVP…GHRNVFVCHY (123 aa)) is the SCP domain. N142 is a glycosylation site (N-linked (GlcNAc...) asparagine). Positions 265–284 (TTTTESTTTSTTTEEPTTTC) are enriched in low complexity. Residues 265-312 (TTTTESTTTSTTTEEPTTTCEPDEPEAEGADNNQEEEEENNDGFRMRV) are disordered. A compositionally biased stretch (acidic residues) spans 285 to 305 (EPDEPEAEGADNNQEEEEENN).

It belongs to the CRISP family. In terms of tissue distribution, expressed in hypodermal tissues.

Its function is as follows. Regulates body size morphogenesis, but does not affect male tail development. This chain is Protein lon-1 (lon-1), found in Caenorhabditis elegans.